The chain runs to 265 residues: Type III pantothenate kinase (265 aa).

Residue Asp6–Val13 coordinates ATP. Gly112–Arg115 provides a ligand contact to substrate. The Proton acceptor role is filled by Asp114. Residue Asp134 participates in K(+) binding. Residue Thr137 participates in ATP binding. Thr189 is a binding site for substrate.

The protein belongs to the type III pantothenate kinase family. In terms of assembly, homodimer. NH4(+) is required as a cofactor. Requires K(+) as cofactor.

It is found in the cytoplasm. It catalyses the reaction (R)-pantothenate + ATP = (R)-4'-phosphopantothenate + ADP + H(+). It functions in the pathway cofactor biosynthesis; coenzyme A biosynthesis; CoA from (R)-pantothenate: step 1/5. In terms of biological role, catalyzes the phosphorylation of pantothenate (Pan), the first step in CoA biosynthesis. The sequence is that of Type III pantothenate kinase from Saccharopolyspora erythraea (strain ATCC 11635 / DSM 40517 / JCM 4748 / NBRC 13426 / NCIMB 8594 / NRRL 2338).